We begin with the raw amino-acid sequence, 312 residues long: Olfactory receptor 5p57 (312 aa).

Residues Met-1–Val-25 are Extracellular-facing. N-linked (GlcNAc...) asparagine glycosylation occurs at Asn-5. The chain crosses the membrane as a helical span at residues Ile-26–Ile-46. Topologically, residues Val-47 to Gln-54 are cytoplasmic. Residues Leu-55 to Ser-75 form a helical membrane-spanning segment. Over Ser-76–Ala-99 the chain is Extracellular. Cys-97 and Cys-189 are joined by a disulfide. A helical membrane pass occupies residues Gln-100–Tyr-120. The Cytoplasmic segment spans residues Asp-121–Ser-133. Residues Thr-134–Val-154 traverse the membrane as a helical segment. Over Asn-155 to Glu-196 the chain is Extracellular. An N-linked (GlcNAc...) asparagine glycan is attached at Asn-165. The helical transmembrane segment at Val-197–Ser-217 threads the bilayer. The Cytoplasmic segment spans residues Tyr-218–Ala-237. Residues Phe-238–Ile-258 traverse the membrane as a helical segment. The Extracellular portion of the chain corresponds to Tyr-259–Asn-271. The helical transmembrane segment at Lys-272 to Phe-292 threads the bilayer. Residues Arg-293 to Ser-312 are Cytoplasmic-facing.

Belongs to the G-protein coupled receptor 1 family.

Its subcellular location is the cell membrane. In terms of biological role, probable odorant receptor, which recognizes only aliphatic alcohols, suggesting that it may convey a 'woody' or 'sweet' sour. The sequence is that of Olfactory receptor 5p57 from Mus musculus (Mouse).